The following is a 420-amino-acid chain: Carbohydrate sulfotransferase 12 (420 aa).

Residues 1-5 (MAKSR) are Cytoplasmic-facing. The chain crosses the membrane as a helical; Signal-anchor for type II membrane protein span at residues 6–26 (LFCLLVALGSVFMILFIIVYW). The Lumenal portion of the chain corresponds to 27–420 (DNVGTANLNL…YPKPDDLLSV (394 aa)). Residues Asn76 and Asn139 are each glycosylated (N-linked (GlcNAc...) asparagine). Position 176-182 (176-182 (PKVACTN)) interacts with 3'-phosphoadenylyl sulfate. N-linked (GlcNAc...) asparagine glycosylation is present at Asn215. 251–259 (RDPFVRLIS) provides a ligand contact to 3'-phosphoadenylyl sulfate. Residues Asn286 and Asn376 are each glycosylated (N-linked (GlcNAc...) asparagine).

Belongs to the sulfotransferase 2 family.

It localises to the golgi apparatus membrane. The catalysed reaction is chondroitin beta-D-glucuronate + n 3'-phosphoadenylyl sulfate = chondroitin 4'-sulfate + n adenosine 3',5'-bisphosphate + n H(+). In terms of biological role, catalyzes the transfer of sulfate to position 4 of the N-acetylgalactosamine (GalNAc) residue of chondroitin and desulfated dermatan sulfate. Chondroitin sulfate constitutes the predominant proteoglycan present in cartilage and is distributed on the surfaces of many cells and extracellular matrices. The sequence is that of Carbohydrate sulfotransferase 12 (chst12) from Xenopus laevis (African clawed frog).